The sequence spans 215 residues: Riboflavin synthase (215 aa).

2 Lumazine-binding repeats span residues 1 to 96 (MFTG…FGGH) and 97 to 193 (FVSG…YRFL). Residues 4–6 (GIV), 47–49 (CLT), 61–66 (DVMPET), 100–102 (GHV), lysine 135, 144–146 (SST), and 158–163 (SVIPHT) each bind 2,4-dihydroxypteridine.

In terms of assembly, homotrimer.

The catalysed reaction is 2 6,7-dimethyl-8-(1-D-ribityl)lumazine + H(+) = 5-amino-6-(D-ribitylamino)uracil + riboflavin. It participates in cofactor biosynthesis; riboflavin biosynthesis; riboflavin from 2-hydroxy-3-oxobutyl phosphate and 5-amino-6-(D-ribitylamino)uracil: step 2/2. In terms of biological role, catalyzes the dismutation of two molecules of 6,7-dimethyl-8-ribityllumazine, resulting in the formation of riboflavin and 5-amino-6-(D-ribitylamino)uracil. The chain is Riboflavin synthase (ribE) from Bacillus amyloliquefaciens (Bacillus velezensis).